The following is a 227-amino-acid chain: Phosphoglycolate phosphatase (227 aa).

Residue D14 is the Nucleophile of the active site. 3 residues coordinate Mg(2+): D14, D16, and D177.

The protein belongs to the HAD-like hydrolase superfamily. CbbY/CbbZ/Gph/YieH family. Requires Mg(2+) as cofactor.

It catalyses the reaction 2-phosphoglycolate + H2O = glycolate + phosphate. It functions in the pathway organic acid metabolism; glycolate biosynthesis; glycolate from 2-phosphoglycolate: step 1/1. Specifically catalyzes the dephosphorylation of 2-phosphoglycolate. Is involved in the dissimilation of the intracellular 2-phosphoglycolate formed during the DNA repair of 3'-phosphoglycolate ends, a major class of DNA lesions induced by oxidative stress. In Thiobacillus denitrificans (strain ATCC 25259 / T1), this protein is Phosphoglycolate phosphatase.